Here is a 355-residue protein sequence, read N- to C-terminus: MTDLASDFDFDLPPALIAEHPARPRDSARLLDIPAAGPFHDRIVRDLPSLLRPGDLLVANDTAVIPAQLDARRGEARIGITLDRILPDGTWHALARNARRLRAGDVLTFPGTPNTAAVISRDDEGGVVLRFDTEGAAFDAFLQAAGVLALPPYIARPFGPTEQDRVDYATIFSAHRGAVAAPTAGLHFTPDLLAALDAAGVGRCTLTLHVGAGTFLPVRGDSIAAHRMHAERGVITAETADAINAARRAGGRIVAVGTTSLRLLESAADPDGTIRPFDGDTAIFIRPGYRFRAVDVLMTNFHLPRSTLFMLVCAFAGYDRMRDAYAHAVADGYRFYSYGDACLLHRAPVAGEQGL.

It belongs to the QueA family. In terms of assembly, monomer.

Its subcellular location is the cytoplasm. It catalyses the reaction 7-aminomethyl-7-carbaguanosine(34) in tRNA + S-adenosyl-L-methionine = epoxyqueuosine(34) in tRNA + adenine + L-methionine + 2 H(+). It functions in the pathway tRNA modification; tRNA-queuosine biosynthesis. Its function is as follows. Transfers and isomerizes the ribose moiety from AdoMet to the 7-aminomethyl group of 7-deazaguanine (preQ1-tRNA) to give epoxyqueuosine (oQ-tRNA). The sequence is that of S-adenosylmethionine:tRNA ribosyltransferase-isomerase from Gluconacetobacter diazotrophicus (strain ATCC 49037 / DSM 5601 / CCUG 37298 / CIP 103539 / LMG 7603 / PAl5).